The following is a 329-amino-acid chain: MENLTCASSVEQDRFASLNFIISQSVDLITSFFTYMLSIIAIKMVLKQSIFETSTKILLFLNIFYANLYQIVYSIDVVVILYKHFFMQEEVCSLLILESSCAPFLETLIGTSSGMMYCQTGLLIERFCATFLKTYNGKKTIFVGSFIAIVVMISTTSTGKLVIWDDPLDDAVLACFIFPKKSKARSTIHFYISTVVSLFNLAASVALNKYNKTLEYQVRFKICARFHKRQVIESTETICFLNFTQFVFMFIYSSGNSTLKSIRDYIQPETYNFWVVWCYTVPFIALTFPLLLIYKVKSTRGIRAQKIVQISNTKQTQDEHINQMKVMWE.

6 consecutive transmembrane segments (helical) span residues 26 to 46, 60 to 80, 141 to 161, 187 to 207, 231 to 251, and 273 to 293; these read VDLI…KMVL, FLNI…VVVI, IFVG…TGKL, TIHF…SVAL, VIES…FMFI, and FWVV…LLLI.

It belongs to the nematode receptor-like protein sra family.

It is found in the membrane. This chain is Serpentine receptor class alpha-8 (sra-8), found in Caenorhabditis elegans.